Here is a 401-residue protein sequence, read N- to C-terminus: Nicotinate phosphoribosyltransferase (401 aa).

Residue His-221 is modified to Phosphohistidine; by autocatalysis.

This sequence belongs to the NAPRTase family. Post-translationally, transiently phosphorylated on a His residue during the reaction cycle. Phosphorylation strongly increases the affinity for substrates and increases the rate of nicotinate D-ribonucleotide production. Dephosphorylation regenerates the low-affinity form of the enzyme, leading to product release.

It carries out the reaction nicotinate + 5-phospho-alpha-D-ribose 1-diphosphate + ATP + H2O = nicotinate beta-D-ribonucleotide + ADP + phosphate + diphosphate. It functions in the pathway cofactor biosynthesis; NAD(+) biosynthesis; nicotinate D-ribonucleotide from nicotinate: step 1/1. Functionally, catalyzes the synthesis of beta-nicotinate D-ribonucleotide from nicotinate and 5-phospho-D-ribose 1-phosphate at the expense of ATP. The protein is Nicotinate phosphoribosyltransferase of Pectobacterium atrosepticum (strain SCRI 1043 / ATCC BAA-672) (Erwinia carotovora subsp. atroseptica).